A 174-amino-acid polypeptide reads, in one-letter code: tRNA (cytidine(56)-2'-O)-methyltransferase (174 aa).

S-adenosyl-L-methionine-binding positions include Leu-80, 105-109, and 123-130; these read GAEKV and ISNQPHSE.

This sequence belongs to the aTrm56 family. In terms of assembly, homodimer.

The protein resides in the cytoplasm. It catalyses the reaction cytidine(56) in tRNA + S-adenosyl-L-methionine = 2'-O-methylcytidine(56) in tRNA + S-adenosyl-L-homocysteine + H(+). Specifically catalyzes the AdoMet-dependent 2'-O-ribose methylation of cytidine at position 56 in tRNAs. In Metallosphaera sedula (strain ATCC 51363 / DSM 5348 / JCM 9185 / NBRC 15509 / TH2), this protein is tRNA (cytidine(56)-2'-O)-methyltransferase.